We begin with the raw amino-acid sequence, 542 residues long: Chaperonin GroEL (542 aa).

Residues 29-32, 86-90, G413, and D494 each bind ATP; these read TLGP and DGTTT.

Belongs to the chaperonin (HSP60) family. Forms a cylinder of 14 subunits composed of two heptameric rings stacked back-to-back. Interacts with the co-chaperonin GroES.

The protein localises to the cytoplasm. The enzyme catalyses ATP + H2O + a folded polypeptide = ADP + phosphate + an unfolded polypeptide.. Together with its co-chaperonin GroES, plays an essential role in assisting protein folding. The GroEL-GroES system forms a nano-cage that allows encapsulation of the non-native substrate proteins and provides a physical environment optimized to promote and accelerate protein folding. In Endomicrobium trichonymphae, this protein is Chaperonin GroEL.